We begin with the raw amino-acid sequence, 337 residues long: SAGA complex subunit SPT3 (337 aa).

The interval 92 to 131 (KDQDASAGVASGTGNPGAGGEDDLKKAGGGEKDEKDGGNM) is disordered. Residues 113 to 128 (DDLKKAGGGEKDEKDG) show a composition bias toward basic and acidic residues. The residue at position 270 (Ser270) is a Phosphoserine.

This sequence belongs to the SPT3 family. Component of the 1.8 MDa SAGA (Spt-Ada-Gcn5 acetyltransferase) complex, which is composed of 19 subunits TRA1, SPT7, TAF5, NGG1/ADA3, SGF73, SPT20/ADA5, SPT8, TAF12, TAF6, HFI1/ADA1, UBP8, GCN5, ADA2, SPT3, SGF29, TAF10, TAF9, SGF11 and SUS1. The SAGA complex is composed of 4 modules, namely the HAT (histone acetyltransferase) module (GCN5, ADA2, NGG1/ADA3 and SGF29), the DUB (deubiquitinating) module (UBP8, SGF11, SGF73 and SUS1), the core or TAF (TBP-associated factor) module (TAF5, TAF6, TAF9, TAF10 and TAF12), and the Tra1 or SPT (Suppressor of Ty) module (TRA1, HFI1/ADA1, SPT3, SPT7, SPT8 and SPT20/ADA5). The Tra1/SPT module binds activators, the core module recruits TBP (TATA-binding protein), the HAT module contains the histone H3 acetyltransferase GCN5, and the DUB module comprises the histone H2B deubiquitinase UBP8. Also identified in an altered form of SAGA, named SALSA (SAGA altered, Spt8 absent) or SLIK (SAGA-like) complex, which contains a C-terminal truncated form of SPT7 and is missing SPT8. However, it has been shown that the SAGA and SAGA-like SALSA/SLIK transcriptional coactivators are structurally and biochemically equivalent.

It is found in the nucleus. The protein resides in the cytoplasm. In terms of biological role, component of the transcription coactivator SAGA complex. SAGA acts as a general cofactor required for essentially all RNA polymerase II transcription. At the promoters, SAGA is required for transcription pre-initiation complex (PIC) recruitment. It influences RNA polymerase II transcriptional activity through different activities such as TBP interaction (via core/TAF module) and promoter selectivity, interaction with transcription activators (via Tra1/SPT module), and chromatin modification through histone acetylation (via HAT module) and deubiquitination (via DUB module). SAGA preferentially acetylates histones H3 (to form H3K9ac, H3K14ac, H3K18ac and H3K23ac) and H2B and deubiquitinates histone H2B. SAGA interacts with DNA via upstream activating sequences (UASs). Also identified in a modified version of SAGA named SALSA or SLIK. The cleavage of SPT7 and the absence of the SPT8 subunit in SLIK neither drive any major conformational differences in its structure compared with SAGA, nor significantly affect HAT, DUB, or DNA-binding activities. SPT3 is required for recruitment of TATA-binding protein (TBP) to SAGA-dependent promoters. During SAGA-mediated transcriptional inhibition, SPT3 and SPT8 prevent binding of TBP to the TATA box. Required for diploid filamentous growth and haploid invasive growth. The protein is SAGA complex subunit SPT3 (SPT3) of Saccharomyces cerevisiae (strain ATCC 204508 / S288c) (Baker's yeast).